The following is a 179-amino-acid chain: Adenine phosphoribosyltransferase (179 aa).

It belongs to the purine/pyrimidine phosphoribosyltransferase family. As to quaternary structure, homodimer.

The protein localises to the cytoplasm. It catalyses the reaction AMP + diphosphate = 5-phospho-alpha-D-ribose 1-diphosphate + adenine. Its pathway is purine metabolism; AMP biosynthesis via salvage pathway; AMP from adenine: step 1/1. Its function is as follows. Catalyzes a salvage reaction resulting in the formation of AMP, that is energically less costly than de novo synthesis. The chain is Adenine phosphoribosyltransferase from Actinobacillus pleuropneumoniae serotype 5b (strain L20).